The primary structure comprises 217 residues: Magnetosome protein MamA (217 aa).

TPR repeat units follow at residues 12 to 44, 46 to 79, 80 to 113, 114 to 147, 148 to 181, and 182 to 215; these read VTLY…NDDI, QVYY…DAFD, VEVA…APDN, IKVA…NPVN, FNVR…RPNE, and GKVH…DERS. An N-terminal domain region spans residues 41 to 112; sequence NDDIRQVYYR…LERSIADAPD (72 aa). Positions 113 to 217 are C-terminal domain; sequence NIKVATVLGL…ANELDERSAV (105 aa).

It belongs to the magnetosome MamA family. As to quaternary structure, forms round, 20 nm diameter complexes with a central cavity. Probably binds MamC. Interacts with full-length Mms6.

The protein localises to the magnetosome membrane. Its function is as follows. Probably forms a large homooligomer on which other magnetosome subunits assemble. Required for formation of functional magnetosomes from pre-existing vesicles. In Magnetospirillum gryphiswaldense (strain DSM 6361 / JCM 21280 / NBRC 15271 / MSR-1), this protein is Magnetosome protein MamA.